Reading from the N-terminus, the 79-residue chain is Exodeoxyribonuclease 7 small subunit (79 aa).

The protein belongs to the XseB family. In terms of assembly, heterooligomer composed of large and small subunits.

It is found in the cytoplasm. The enzyme catalyses Exonucleolytic cleavage in either 5'- to 3'- or 3'- to 5'-direction to yield nucleoside 5'-phosphates.. Bidirectionally degrades single-stranded DNA into large acid-insoluble oligonucleotides, which are then degraded further into small acid-soluble oligonucleotides. The protein is Exodeoxyribonuclease 7 small subunit of Dechloromonas aromatica (strain RCB).